The sequence spans 88 residues: Small ribosomal subunit protein bS16 (88 aa).

This sequence belongs to the bacterial ribosomal protein bS16 family.

The chain is Small ribosomal subunit protein bS16 from Geobacter sulfurreducens (strain ATCC 51573 / DSM 12127 / PCA).